The chain runs to 560 residues: Ribonuclease J 1 (560 aa).

Residues His-76, His-78, Asp-80, His-81, His-144, and Asp-166 each contribute to the Zn(2+) site. 366-370 (HTSGH) provides a ligand contact to substrate. His-392 contributes to the Zn(2+) binding site.

This sequence belongs to the metallo-beta-lactamase superfamily. RNA-metabolizing metallo-beta-lactamase-like family. Bacterial RNase J subfamily. Homodimer, may be a subunit of the RNA degradosome. The cofactor is Zn(2+).

Its subcellular location is the cytoplasm. Functionally, an RNase that has 5'-3' exonuclease and possibly endonuclease activity. Involved in maturation of rRNA and in some organisms also mRNA maturation and/or decay. Has an overlapping but not completely redundant role with RNase J2 in the decay of mRNA. In Streptococcus pyogenes serotype M3 (strain ATCC BAA-595 / MGAS315), this protein is Ribonuclease J 1.